A 541-amino-acid chain; its full sequence is Chaperonin GroEL (541 aa).

ATP is bound by residues 29–32 (TIGP), 86–90 (DGTTT), Gly413, 478–480 (NAA), and Asp494.

The protein belongs to the chaperonin (HSP60) family. As to quaternary structure, forms a cylinder of 14 subunits composed of two heptameric rings stacked back-to-back. Interacts with the co-chaperonin GroES.

The protein localises to the cytoplasm. It catalyses the reaction ATP + H2O + a folded polypeptide = ADP + phosphate + an unfolded polypeptide.. In terms of biological role, together with its co-chaperonin GroES, plays an essential role in assisting protein folding. The GroEL-GroES system forms a nano-cage that allows encapsulation of the non-native substrate proteins and provides a physical environment optimized to promote and accelerate protein folding. The polypeptide is Chaperonin GroEL (Oenococcus oeni (strain ATCC BAA-331 / PSU-1)).